The following is a 461-amino-acid chain: TWiK family of potassium channels protein 18 (461 aa).

The Cytoplasmic portion of the chain corresponds to 1–21; it reads MAIVAQGVSTILTTFQKTFKG. The helical transmembrane segment at 22 to 42 threads the bilayer; the sequence is LLPLIILVAYTLLGAWIFWMI. An N-linked (GlcNAc...) asparagine glycan is attached at Asn-88. Residues 116–136 constitute an intramembrane region (pore-forming); the sequence is FLGSIFYCMTVYTTIGYGNIV. A helical membrane pass occupies residues 144 to 164; the sequence is FATILYAFIGIPLTVLSLYCL. Over 165 to 224 the chain is Cytoplasmic; it reads GSLFAKGCKMLWRFFLKSTRVVSKDLSNKISEAADNIEEGTTAITPSAEKTENNDDDLLS. A helical membrane pass occupies residues 225–245; sequence FPISGLLLITVIWVIFCAVLF. An intramembrane region (pore-forming) is located at residues 253–273; the sequence is FGTSLYFTLISFTTIGFGDIL. Residues 281-301 form a helical membrane-spanning segment; that stretch reads PIVGVLLLIGLSLVSTVMTLI. Topologically, residues 302 to 461 are cytoplasmic; the sequence is QQQIEALASG…GNEDYLEHDI (160 aa). The interval 328 to 347 is disordered; it reads REDGEVDEHVDPEEDPENNK.

It belongs to the two pore domain potassium channel (TC 1.A.1.8) family. In terms of tissue distribution, expressed in body wall muscle.

The protein localises to the membrane. Its function is as follows. Outwardly rectifying potassium channel protein; activity is sharply augmented by increase in temperature. The protein is TWiK family of potassium channels protein 18 (twk-18) of Caenorhabditis elegans.